Consider the following 127-residue polypeptide: Small ribosomal subunit protein uS13 (127 aa).

A disordered region spans residues 99-127 (RGQRTRTNARTRRGRRGQAIGIKKKTLKK).

Belongs to the universal ribosomal protein uS13 family. Part of the 30S ribosomal subunit. Forms a loose heterodimer with protein S19. Forms two bridges to the 50S subunit in the 70S ribosome.

In terms of biological role, located at the top of the head of the 30S subunit, it contacts several helices of the 16S rRNA. In the 70S ribosome it contacts the 23S rRNA (bridge B1a) and protein L5 of the 50S subunit (bridge B1b), connecting the 2 subunits; these bridges are implicated in subunit movement. Contacts the tRNAs in the A and P-sites. This is Small ribosomal subunit protein uS13 from Roseiflexus castenholzii (strain DSM 13941 / HLO8).